A 154-amino-acid polypeptide reads, in one-letter code: MGLSDGEWQLVLNAWGKVEADVAGHGQEVLIRLFTGHPETLEKFDKFKHLKTEAEMKASEDLKKHGNTVLTALGGILKKKGHHEAEVKHLAESHANKHKIPVKYLEFISDAIIHVLHAKHPSNFGADAQGAMSKALELFRNDMAAQYKVLGFQG.

One can recognise a Globin domain in the interval 2–148 (GLSDGEWQLV…FRNDMAAQYK (147 aa)). The residue at position 4 (S4) is a Phosphoserine. Residue H65 coordinates nitrite. H65 serves as a coordination point for O2. T68 carries the phosphothreonine modification. Residue H94 coordinates heme b.

This sequence belongs to the globin family. As to quaternary structure, monomeric.

It localises to the cytoplasm. Its subcellular location is the sarcoplasm. It catalyses the reaction Fe(III)-heme b-[protein] + nitric oxide + H2O = Fe(II)-heme b-[protein] + nitrite + 2 H(+). It carries out the reaction H2O2 + AH2 = A + 2 H2O. Its function is as follows. Monomeric heme protein which primary function is to store oxygen and facilitate its diffusion within muscle tissues. Reversibly binds oxygen through a pentacoordinated heme iron and enables its timely and efficient release as needed during periods of heightened demand. Depending on the oxidative conditions of tissues and cells, and in addition to its ability to bind oxygen, it also has a nitrite reductase activity whereby it regulates the production of bioactive nitric oxide. Under stress conditions, like hypoxia and anoxia, it also protects cells against reactive oxygen species thanks to its pseudoperoxidase activity. The polypeptide is Myoglobin (MB) (Cervus elaphus (Red deer)).